The following is a 242-amino-acid chain: Ribosomal RNA large subunit methyltransferase E (242 aa).

Positions 88, 90, 111, 127, and 151 each coordinate S-adenosyl-L-methionine. Lysine 191 functions as the Proton acceptor in the catalytic mechanism.

Belongs to the class I-like SAM-binding methyltransferase superfamily. RNA methyltransferase RlmE family.

It localises to the cytoplasm. It catalyses the reaction uridine(2552) in 23S rRNA + S-adenosyl-L-methionine = 2'-O-methyluridine(2552) in 23S rRNA + S-adenosyl-L-homocysteine + H(+). Functionally, specifically methylates the uridine in position 2552 of 23S rRNA at the 2'-O position of the ribose in the fully assembled 50S ribosomal subunit. The protein is Ribosomal RNA large subunit methyltransferase E of Bartonella tribocorum (strain CIP 105476 / IBS 506).